The chain runs to 220 residues: 3-dehydroquinate dehydratase (220 aa).

3-dehydroquinate contacts are provided by residues 29–31 (EFR) and Arg56. His116 serves as the catalytic Proton donor/acceptor. Lys142 (schiff-base intermediate with substrate) is an active-site residue. The 3-dehydroquinate site is built by Arg180, Ser200, and Gln204.

Belongs to the type-I 3-dehydroquinase family. Homodimer.

The catalysed reaction is 3-dehydroquinate = 3-dehydroshikimate + H2O. It functions in the pathway metabolic intermediate biosynthesis; chorismate biosynthesis; chorismate from D-erythrose 4-phosphate and phosphoenolpyruvate: step 3/7. In terms of biological role, involved in the third step of the chorismate pathway, which leads to the biosynthesis of aromatic amino acids. Catalyzes the cis-dehydration of 3-dehydroquinate (DHQ) and introduces the first double bond of the aromatic ring to yield 3-dehydroshikimate. The protein is 3-dehydroquinate dehydratase of Methanocaldococcus jannaschii (strain ATCC 43067 / DSM 2661 / JAL-1 / JCM 10045 / NBRC 100440) (Methanococcus jannaschii).